A 410-amino-acid polypeptide reads, in one-letter code: Mating-type locus allele B4 protein (410 aa).

The tract at residues 1 to 110 is variable domain between B alleles; the sequence is MSSDPKISIT…ANASSPVVGC (110 aa). The homeobox; TALE-type DNA-binding region spans 107-184; it reads VVGCRELSED…NARRRSGWSH (78 aa). Positions 111–410 are highly conserved between B alleles; it reads RELSEDLPAY…PFLCLSVAFV (300 aa). 3 disordered regions span residues 202–241, 278–335, and 375–394; these read RAKL…TPAD, TPKP…TPEL, and RGNR…QPDE. The segment covering 206–222 has biased composition (low complexity); that stretch reads SSSNQSTPPSPTSEYPS. The Nuclear localization signal motif lies at 276 to 308; sequence KKTPKPGMPRPVTTVAKRQPARKTKPAAKPKSR. Residues 294–307 show a composition bias toward basic residues; the sequence is QPARKTKPAAKPKS. The segment covering 312 to 335 has biased composition (polar residues); that stretch reads PRASTTPSIDSTLDSSKLESTPEL. The interval 333-410 is not essential for B4 function; that stretch reads PELSMCSTAD…PFLCLSVAFV (78 aa). Positions 375–388 are enriched in basic residues; it reads RGNRKVKALPKRAG.

It belongs to the TALE/M-ATYP homeobox family.

Its subcellular location is the nucleus. The B locus has at least 25 alleles, and any combination of two different B alleles yields a multimeric regulatory protein, that activates genes responsible for the pathogenicity and for the sexual development of the fungus within the corn plant. This Mycosarcoma maydis (Corn smut fungus) protein is Mating-type locus allele B4 protein.